A 143-amino-acid polypeptide reads, in one-letter code: AP-2 complex subunit sigma (143 aa).

It belongs to the adaptor complexes small subunit family. Adaptor protein complex 2 (AP-2) is a heterotetramer composed of two large adaptins (alpha-type subunit APL3 and beta-type subunit APL1), a medium chain (mu-type subunit APM4) and a small adaptin (sigma-type subunit APS2).

It is found in the cell membrane. It localises to the membrane. Its subcellular location is the coated pit. Its function is as follows. Component of the adaptor complexes which link clathrin to receptors in coated vesicles. Clathrin-associated protein complexes are believed to interact with the cytoplasmic tails of membrane proteins, leading to their selection and concentration. The protein is AP-2 complex subunit sigma (aps-2) of Neurospora crassa (strain ATCC 24698 / 74-OR23-1A / CBS 708.71 / DSM 1257 / FGSC 987).